The chain runs to 408 residues: S-adenosylmethionine sensor upstream of mTORC1 (408 aa).

Positions 1-16 (MEAAPRSRPRPGGAAA) are enriched in low complexity. The segment at 1-37 (MEAAPRSRPRPGGAAASPPPPPPPPPPEQERKLEQEK) is disordered. Residues 17–27 (SPPPPPPPPPP) show a composition bias toward pro residues. The span at 28-37 (EQERKLEQEK) shows a compositional bias: basic and acidic residues. The S-adenosyl-L-methionine site is built by Arg97, Gly175, Asp193, Asp205, Phe206, and Ser247.

This sequence belongs to the BMT2/SAMTOR family. Interacts with the GATOR1 complex; interaction is disrupted when SAMTOR binds S-adenosyl-L-methionine. Interacts with the KICSTOR complex; interaction is disrupted when SAMTOR binds S-adenosyl-L-methionine.

Its function is as follows. S-adenosyl-L-methionine-binding protein that acts as an inhibitor of mTORC1 signaling via interaction with the GATOR1 and KICSTOR complexes. Acts as a sensor of S-adenosyl-L-methionine to signal methionine sufficiency to mTORC1: in presence of methionine, binds S-adenosyl-L-methionine, leading to disrupt interaction with the GATOR1 and KICSTOR complexes and promote mTORC1 signaling. Upon methionine starvation, S-adenosyl-L-methionine levels are reduced, thereby promoting the association with GATOR1 and KICSTOR, leading to inhibit mTORC1 signaling. Probably also acts as a S-adenosyl-L-methionine-dependent methyltransferase. The protein is S-adenosylmethionine sensor upstream of mTORC1 of Gallus gallus (Chicken).